A 376-amino-acid polypeptide reads, in one-letter code: Alpha-ketoglutarate-dependent dioxygenase esdpJ (376 aa).

Residues His-145 and Asp-147 each coordinate Fe cation. Position 202 (Thr-202) interacts with 2-oxoglutarate. The interval 234–260 (YNQSSQEKKSEIHVEPRGSPNNVGSDL) is disordered. Residues 239–249 (QEKKSEIHVEP) are compositionally biased toward basic and acidic residues. His-335 contributes to the Fe cation binding site. The 2-oxoglutarate site is built by Arg-347 and Arg-351. A disordered region spans residues 354–376 (GVGEQPYLDPESKTRREALGEFN). The span at 363-376 (PESKTRREALGEFN) shows a compositional bias: basic and acidic residues.

The protein belongs to the TfdA dioxygenase family. Fe(2+) serves as cofactor.

Its function is as follows. Alpha-ketoglutarate-dependent dioxygenas; part of the cluster that mediates the biosynthesis of shearones, diterpenoid pyrones (DPs) which are structurally diverse meroterpenoids consisting of a diterpene linked by a pyrone, and which may exhibit a range of bioactivities. The alpha-ketoglutarate-dependent dioxygenase esdpJ seems not to be involved in this pathway. The molecular scaffold is commonly biosynthesized by a series of enzymes including the non-reducing polyketide synthase (NR-PKS) esdpA that generates an alpha-pyrone; the prenyltransferase esdpC that attaches a geranylgeranyl pyrophosphate (GGPP) produced by the GGPP synthase (GGPPS) esdpD onto the pyrone unit; the FAD-dependent monooxygenase esdpE that converts an olefin on the diterpene unit into an epoxide; and the terpene cyclase esdpB that catalyzes the cyclization reactions to give the molecular backbone shearone A. In the modification steps, esdpF oxidizes the hydroxy group to a ketone at C-3 and esdpG then attaches hydroxy groups at both C-11 and C-12. After that, esdpI hydroxylates at C-20 and esdpH hydroxylates at C-6'. The ether bridge is generated by nucleophilic attack of the hydroxy group at C-20 to the carbonyl carbon at C-3. EsdpH can also functions prior to esdpI. The different combinations of these modification enzymes lead to the production of diverse shearone derivatives, shearone I being the end product of the pathway. This is Alpha-ketoglutarate-dependent dioxygenase esdpJ from Penicillium shearii (Eupenicillium shearii).